We begin with the raw amino-acid sequence, 925 residues long: Translation initiation factor IF-2 (925 aa).

Disordered regions lie at residues 52–84 (GGGK…VKAP) and 98–326 (AGGN…GVRL). The span at 57 to 68 (AEGAAKAPAKAA) shows a compositional bias: low complexity. Basic and acidic residues predominate over residues 69 to 84 (AKGDAKTAAKGDVKAP). Low complexity predominate over residues 98–138 (AGGNGEAAAPPAQPGGTATTPAAQATPEAPARPGPAAARPS). 2 stretches are compositionally biased toward pro residues: residues 139–169 (APAP…PAPK) and 193–207 (PRPV…PGAP). A compositionally biased stretch (gly residues) spans 236–296 (RPGGGRPGGP…GAAGAFGRPG (61 aa)). Basic residues predominate over residues 300–309 (RRGRKSKRQK). The tr-type G domain maps to 421 to 592 (TRPPVVTVMG…AVLLTADAAL (172 aa)). Residues 430 to 437 (GHVDHGKT) form a G1 region. GTP is bound at residue 430 to 437 (GHVDHGKT). Residues 455-459 (GITQH) form a G2 region. Residues 480 to 483 (DTPG) form a G3 region. GTP is bound by residues 480–484 (DTPGH) and 534–537 (NKID). A G4 region spans residues 534–537 (NKID). Positions 570–572 (SAK) are G5.

The protein belongs to the TRAFAC class translation factor GTPase superfamily. Classic translation factor GTPase family. IF-2 subfamily.

The protein resides in the cytoplasm. Its function is as follows. One of the essential components for the initiation of protein synthesis. Protects formylmethionyl-tRNA from spontaneous hydrolysis and promotes its binding to the 30S ribosomal subunits. Also involved in the hydrolysis of GTP during the formation of the 70S ribosomal complex. The polypeptide is Translation initiation factor IF-2 (Mycolicibacterium paratuberculosis (strain ATCC BAA-968 / K-10) (Mycobacterium paratuberculosis)).